The primary structure comprises 276 residues: Urease accessory protein UreD (276 aa).

The protein belongs to the UreD family. In terms of assembly, ureD, UreF and UreG form a complex that acts as a GTP-hydrolysis-dependent molecular chaperone, activating the urease apoprotein by helping to assemble the nickel containing metallocenter of UreC. The UreE protein probably delivers the nickel.

The protein resides in the cytoplasm. In terms of biological role, required for maturation of urease via the functional incorporation of the urease nickel metallocenter. The protein is Urease accessory protein UreD of Bradyrhizobium diazoefficiens (strain JCM 10833 / BCRC 13528 / IAM 13628 / NBRC 14792 / USDA 110).